The sequence spans 356 residues: uncharacterized protein (356 aa).

Residues 1–21 form the signal peptide; sequence MHWSRFVGIFLVFSVFSLVNC. The interval 293-317 is disordered; sequence RPETDYEGANLPNIPSKKGSANQPV.

This is an uncharacterized protein from Acanthamoeba polyphaga mimivirus (APMV).